A 739-amino-acid polypeptide reads, in one-letter code: Phosphoribosylformylglycinamidine synthase subunit PurL (739 aa).

The active site involves H54. ATP-binding residues include Y57 and K96. E98 is a binding site for Mg(2+). Substrate contacts are provided by residues 99-102 (SHNH) and R121. H100 acts as the Proton acceptor in catalysis. Position 122 (D122) interacts with Mg(2+). A substrate-binding site is contributed by Q245. Residue D273 coordinates Mg(2+). Residue 317–319 (ESQ) coordinates substrate. Residues D500 and G537 each coordinate ATP. A Mg(2+)-binding site is contributed by N538. S540 is a binding site for substrate.

It belongs to the FGAMS family. Monomer. Part of the FGAM synthase complex composed of 1 PurL, 1 PurQ and 2 PurS subunits.

The protein localises to the cytoplasm. The enzyme catalyses N(2)-formyl-N(1)-(5-phospho-beta-D-ribosyl)glycinamide + L-glutamine + ATP + H2O = 2-formamido-N(1)-(5-O-phospho-beta-D-ribosyl)acetamidine + L-glutamate + ADP + phosphate + H(+). It functions in the pathway purine metabolism; IMP biosynthesis via de novo pathway; 5-amino-1-(5-phospho-D-ribosyl)imidazole from N(2)-formyl-N(1)-(5-phospho-D-ribosyl)glycinamide: step 1/2. Functionally, part of the phosphoribosylformylglycinamidine synthase complex involved in the purines biosynthetic pathway. Catalyzes the ATP-dependent conversion of formylglycinamide ribonucleotide (FGAR) and glutamine to yield formylglycinamidine ribonucleotide (FGAM) and glutamate. The FGAM synthase complex is composed of three subunits. PurQ produces an ammonia molecule by converting glutamine to glutamate. PurL transfers the ammonia molecule to FGAR to form FGAM in an ATP-dependent manner. PurS interacts with PurQ and PurL and is thought to assist in the transfer of the ammonia molecule from PurQ to PurL. The chain is Phosphoribosylformylglycinamidine synthase subunit PurL from Bacillus cereus (strain Q1).